A 317-amino-acid polypeptide reads, in one-letter code: Malate dehydrogenase (317 aa).

Residues 10–15 (GGGQIG) and Asp-34 contribute to the NAD(+) site. Substrate is bound by residues Arg-83 and Arg-89. NAD(+) contacts are provided by residues Asn-96 and 119-121 (ISN). Substrate-binding residues include Asn-121 and Arg-152. The active-site Proton acceptor is the His-176.

This sequence belongs to the LDH/MDH superfamily. MDH type 3 family.

The catalysed reaction is (S)-malate + NAD(+) = oxaloacetate + NADH + H(+). Catalyzes the reversible oxidation of malate to oxaloacetate. The polypeptide is Malate dehydrogenase (Geobacter sulfurreducens (strain ATCC 51573 / DSM 12127 / PCA)).